The following is a 351-amino-acid chain: Holliday junction branch migration complex subunit RuvB (351 aa).

The segment at 4 to 185 (HDRELVSPEA…FGFVAHMDFY (182 aa)) is large ATPase domain (RuvB-L). ATP is bound by residues leucine 24, arginine 25, glycine 66, lysine 69, threonine 70, threonine 71, 132–134 (EDF), arginine 175, tyrosine 185, and arginine 222. Threonine 70 contributes to the Mg(2+) binding site. Positions 186–256 (SPEELELILH…CARAALSLYE (71 aa)) are small ATPAse domain (RuvB-S). A head domain (RuvB-H) region spans residues 259 to 351 (DEGLDRLDRA…AALFDPDEEP (93 aa)). DNA is bound by residues arginine 314 and arginine 319.

Belongs to the RuvB family. As to quaternary structure, homohexamer. Forms an RuvA(8)-RuvB(12)-Holliday junction (HJ) complex. HJ DNA is sandwiched between 2 RuvA tetramers; dsDNA enters through RuvA and exits via RuvB. An RuvB hexamer assembles on each DNA strand where it exits the tetramer. Each RuvB hexamer is contacted by two RuvA subunits (via domain III) on 2 adjacent RuvB subunits; this complex drives branch migration. In the full resolvosome a probable DNA-RuvA(4)-RuvB(12)-RuvC(2) complex forms which resolves the HJ.

The protein resides in the cytoplasm. The enzyme catalyses ATP + H2O = ADP + phosphate + H(+). The RuvA-RuvB-RuvC complex processes Holliday junction (HJ) DNA during genetic recombination and DNA repair, while the RuvA-RuvB complex plays an important role in the rescue of blocked DNA replication forks via replication fork reversal (RFR). RuvA specifically binds to HJ cruciform DNA, conferring on it an open structure. The RuvB hexamer acts as an ATP-dependent pump, pulling dsDNA into and through the RuvAB complex. RuvB forms 2 homohexamers on either side of HJ DNA bound by 1 or 2 RuvA tetramers; 4 subunits per hexamer contact DNA at a time. Coordinated motions by a converter formed by DNA-disengaged RuvB subunits stimulates ATP hydrolysis and nucleotide exchange. Immobilization of the converter enables RuvB to convert the ATP-contained energy into a lever motion, pulling 2 nucleotides of DNA out of the RuvA tetramer per ATP hydrolyzed, thus driving DNA branch migration. The RuvB motors rotate together with the DNA substrate, which together with the progressing nucleotide cycle form the mechanistic basis for DNA recombination by continuous HJ branch migration. Branch migration allows RuvC to scan DNA until it finds its consensus sequence, where it cleaves and resolves cruciform DNA. The chain is Holliday junction branch migration complex subunit RuvB from Thermobifida fusca (strain YX).